The primary structure comprises 176 residues: Ribosome maturation factor RimM (176 aa).

The 80-residue stretch at 97–176 (EDEFYWRDLI…QILVDWDPDF (80 aa)) folds into the PRC barrel domain.

It belongs to the RimM family. As to quaternary structure, binds ribosomal protein uS19.

Its subcellular location is the cytoplasm. An accessory protein needed during the final step in the assembly of 30S ribosomal subunit, possibly for assembly of the head region. Essential for efficient processing of 16S rRNA. May be needed both before and after RbfA during the maturation of 16S rRNA. It has affinity for free ribosomal 30S subunits but not for 70S ribosomes. This Shewanella putrefaciens (strain CN-32 / ATCC BAA-453) protein is Ribosome maturation factor RimM.